The following is a 511-amino-acid chain: GMP synthase [glutamine-hydrolyzing] (511 aa).

In terms of domain architecture, Glutamine amidotransferase type-1 spans 5–195 (DILVLDFGSQ…AKYACNCESV (191 aa)). Residue Cys82 is the Nucleophile of the active site. Residues His169 and Glu171 contribute to the active site. The region spanning 196-386 (WNMGSFAKTQ…LGLSKEVVYR (191 aa)) is the GMPS ATP-PPase domain. 223–229 (SGGVDSS) serves as a coordination point for ATP.

As to quaternary structure, homodimer.

It catalyses the reaction XMP + L-glutamine + ATP + H2O = GMP + L-glutamate + AMP + diphosphate + 2 H(+). The protein operates within purine metabolism; GMP biosynthesis; GMP from XMP (L-Gln route): step 1/1. Functionally, catalyzes the synthesis of GMP from XMP. The protein is GMP synthase [glutamine-hydrolyzing] of Campylobacter jejuni subsp. doylei (strain ATCC BAA-1458 / RM4099 / 269.97).